The chain runs to 347 residues: Protease HtpX homolog (347 aa).

3 consecutive transmembrane segments (helical) span residues 8–28 (IAFG…VVIA), 46–66 (ALTA…IAIV), and 76–96 (WGFI…TYIA). His174 serves as a coordination point for Zn(2+). Glu175 is an active-site residue. His178 serves as a coordination point for Zn(2+). The next 2 helical transmembrane spans lie at 185 to 205 (ALML…VSSV) and 221 to 241 (LLAA…LLVL). Zn(2+) is bound at residue Glu248.

The protein belongs to the peptidase M48B family. Zn(2+) serves as cofactor.

It is found in the cell membrane. The sequence is that of Protease HtpX homolog from Pyrobaculum islandicum (strain DSM 4184 / JCM 9189 / GEO3).